The primary structure comprises 446 residues: Aspartokinase (446 aa).

The 45-residue stretch at 250-294 (IPLVKSTYMEESALNTKHSTKIDIPEDASGSTYKLPIELALQNRY) folds into the RPE1 insert domain.

This sequence belongs to the aspartokinase family.

It catalyses the reaction L-aspartate + ATP = 4-phospho-L-aspartate + ADP. Its pathway is amino-acid biosynthesis; L-lysine biosynthesis via DAP pathway; (S)-tetrahydrodipicolinate from L-aspartate: step 1/4. It participates in amino-acid biosynthesis; L-methionine biosynthesis via de novo pathway; L-homoserine from L-aspartate: step 1/3. It functions in the pathway amino-acid biosynthesis; L-threonine biosynthesis; L-threonine from L-aspartate: step 1/5. The polypeptide is Aspartokinase (lysC) (Rickettsia prowazekii (strain Madrid E)).